The chain runs to 87 residues: Small ribosomal subunit protein uS15 (87 aa).

Belongs to the universal ribosomal protein uS15 family. In terms of assembly, part of the 30S ribosomal subunit. Forms a bridge to the 50S subunit in the 70S ribosome, contacting the 23S rRNA.

In terms of biological role, one of the primary rRNA binding proteins, it binds directly to 16S rRNA where it helps nucleate assembly of the platform of the 30S subunit by binding and bridging several RNA helices of the 16S rRNA. Functionally, forms an intersubunit bridge (bridge B4) with the 23S rRNA of the 50S subunit in the ribosome. The protein is Small ribosomal subunit protein uS15 of Alkaliphilus oremlandii (strain OhILAs) (Clostridium oremlandii (strain OhILAs)).